A 236-amino-acid chain; its full sequence is uncharacterized protein (236 aa).

The chain crosses the membrane as a helical span at residues 15–34; the sequence is GGMAHIISEAVIAGSIGLYF. Positions 36 to 71 form a coiled coil; that stretch reads KKISALEQTVQELQSQLEVQNNQLQWLIQQQTRRLA. Disordered stretches follow at residues 83-113 and 185-236; these read SPLP…FQFK and ATTQ…IDCE. Composition is skewed to polar residues over residues 93–102 and 185–195; these read QQSTTTNAAG and ATTQVSTFSKP. A compositionally biased stretch (basic and acidic residues) spans 225-236; sequence ALDKILNDIDCE.

Its subcellular location is the membrane. This is an uncharacterized protein from Aedes vexans (Inland floodwater mosquito).